The primary structure comprises 125 residues: SOSS complex subunit C homolog (125 aa).

The segment at 43–77 (MPSPQLLGQPTVAPEFLPQGVGLPTNATPPRSAFN) is disordered. Over residues 67-77 (TNATPPRSAFN) the composition is skewed to polar residues.

Belongs to the SOSS-C family.

This chain is SOSS complex subunit C homolog, found in Drosophila persimilis (Fruit fly).